We begin with the raw amino-acid sequence, 133 residues long: Helix-loop-helix protein 1 (133 aa).

Positions 1 to 79 are disordered; it reads MMLNSDTMEL…RRATAKYRTA (79 aa). Over residues 25-45 the composition is skewed to gly residues; the sequence is DCGGGAGPDGAGPGGPGGGQA. A compositionally biased stretch (basic and acidic residues) spans 52 to 65; that stretch reads EPGRKDLQHLSREE. The segment covering 66-79 has biased composition (basic residues); the sequence is RRRRRRATAKYRTA. The 53-residue stretch at 75–127 folds into the bHLH domain; it reads KYRTAHATRERIRVEAFNLAFAELRKLLPTLPPDKKLSKIEILRLAICYISYL.

As to quaternary structure, efficient DNA binding requires dimerization with another bHLH protein.

Its subcellular location is the nucleus. In terms of biological role, may serve as DNA-binding protein and may be involved in the control of cell-type determination, possibly within the developing nervous system. This Homo sapiens (Human) protein is Helix-loop-helix protein 1 (NHLH1).